Here is a 337-residue protein sequence, read N- to C-terminus: Manganese-dependent ADP-ribose/CDP-alcohol diphosphatase (337 aa).

The residue at position 1 (Met1) is an N-acetylmethionine. Zn(2+)-binding residues include Asp25, Gln27, Asp74, Asn110, His241, His278, and His280.

This sequence belongs to the ADPRibase-Mn family. In terms of assembly, monomer. The cofactor is Mg(2+).

It carries out the reaction CDP-choline + H2O = phosphocholine + CMP + 2 H(+). It catalyses the reaction ADP-D-ribose + H2O = D-ribose 5-phosphate + AMP + 2 H(+). The catalysed reaction is CDP-glycerol + H2O = sn-glycerol 3-phosphate + CMP + 2 H(+). In terms of biological role, hydrolyzes ADP-ribose, IDP-ribose, CDP-glycerol, CDP-choline and CDP-ethanolamine, but not other non-reducing ADP-sugars or CDP-glucose. May be involved in immune cell signaling as suggested by the second-messenger role of ADP-ribose, which activates TRPM2 as a mediator of oxidative/nitrosative stress. In Bos taurus (Bovine), this protein is Manganese-dependent ADP-ribose/CDP-alcohol diphosphatase (ADPRM).